The sequence spans 197 residues: ADP-ribosylation factor-like protein 16 (197 aa).

Residues 30-37 (GATGVGKT), 82-86 (ELGGC), and 139-142 (NKID) contribute to the GTP site.

Belongs to the small GTPase superfamily. Arf family. As to quaternary structure, interacts with RIGI; this interaction is GTP-dependent and induced upon viral infection; this interaction suppresses the RNA sensing activity of RIGI.

Its subcellular location is the cytoplasm. Functionally, may suppress the RNA sensing activity of RIGI in a GTP-dependent. The polypeptide is ADP-ribosylation factor-like protein 16 (Homo sapiens (Human)).